A 1045-amino-acid chain; its full sequence is FERM, ARHGEF and pleckstrin domain-containing protein 1 (1045 aa).

Residues 1 to 37 form a disordered region; sequence MGEIEQRPTPGSRLGAPENSGISTLERGQKPPPTPSG. Phosphoserine occurs at positions 20 and 23. Thr24 carries the phosphothreonine modification. The FERM domain maps to 40-320; that stretch reads VSIKIQMLDD…EHHAFFRLFE (281 aa). Ser340, Ser373, Ser389, Ser403, Ser418, Ser427, and Ser433 each carry phosphoserine. Positions 392–534 are disordered; that stretch reads SASLTFGEGA…TDDEDEGRRK (143 aa). 2 stretches are compositionally biased toward polar residues: residues 471-489 and 496-511; these read TGSL…NSQG and VTLS…QASP. Phosphoserine occurs at positions 510 and 514. The region spanning 540-730 is the DH domain; the sequence is KAYFIAKEVS…TEMVAQLHGT (191 aa). The region spanning 759-856 is the PH 1 domain; that stretch reads EFIRLGSLSK…WVEDIQMAID (98 aa). Phosphoserine is present on residues Ser833, Ser872, and Ser878. The interval 866 to 902 is disordered; it reads PEFLASSPPDNKSPDEATAADQESEDDLSASRTSLER. Thr883 is subject to Phosphothreonine. Ser889, Ser896, and Ser899 each carry phosphoserine. Residues 932–1029 form the PH 2 domain; sequence ENQLSGNLLR…WMEVIRSATS (98 aa).

Interacts with CADM1. Interacts with RAC1.

The protein localises to the cell membrane. Its subcellular location is the synapse. It is found in the synaptosome. It localises to the cytoplasm. The protein resides in the cytosol. The protein localises to the cell projection. Its subcellular location is the filopodium. It is found in the dendrite. It localises to the dendritic spine. In terms of biological role, functions as a guanine nucleotide exchange factor for RAC1. May play a role in semaphorin signaling. Plays a role in the assembly and disassembly of dendritic filopodia, the formation of dendritic spines, regulation of dendrite length and ultimately the formation of synapses. This Pongo abelii (Sumatran orangutan) protein is FERM, ARHGEF and pleckstrin domain-containing protein 1 (FARP1).